The sequence spans 1578 residues: Pentafunctional AROM polypeptide (1578 aa).

Positions 1–384 are 3-dehydroquinate synthase; it reads MTGPTKISIL…YEPRASVVPN (384 aa). Residues 44 to 46, 81 to 84, 114 to 116, and aspartate 119 contribute to the NAD(+) site; these read DTN, EVSK, and GGV. A 7-phospho-2-dehydro-3-deoxy-D-arabino-heptonate-binding site is contributed by arginine 130. 139 to 140 is an NAD(+) binding site; that stretch reads TT. Positions 146 and 152 each coordinate 7-phospho-2-dehydro-3-deoxy-D-arabino-heptonate. Lysine 161 lines the NAD(+) pocket. Residue asparagine 162 participates in 7-phospho-2-dehydro-3-deoxy-D-arabino-heptonate binding. NAD(+)-binding positions include 179 to 182 and asparagine 190; that span reads FLET. Glutamate 194 contacts Zn(2+). 7-phospho-2-dehydro-3-deoxy-D-arabino-heptonate is bound by residues 194–197 and lysine 250; that span reads EVIK. Glutamate 260 acts as the Proton acceptor; for 3-dehydroquinate synthase activity in catalysis. Residues 264–268 and histidine 271 contribute to the 7-phospho-2-dehydro-3-deoxy-D-arabino-heptonate site; that span reads RNLLN. Histidine 271 contacts Zn(2+). Histidine 275 (proton acceptor; for 3-dehydroquinate synthase activity) is an active-site residue. Positions 287 and 356 each coordinate 7-phospho-2-dehydro-3-deoxy-D-arabino-heptonate. Residue histidine 287 participates in Zn(2+) binding. The tract at residues 397–842 is EPSP synthase; it reads VYPGVSPASE…WDTLRQKFAV (446 aa). Residue cysteine 824 is the For EPSP synthase activity of the active site. Residues 864–1055 form a shikimate kinase region; the sequence is SASVFIIGMR…KKKQHSFFVS (192 aa). Residue 871-878 participates in ATP binding; it reads GMRGAGKT. The interval 1056–1276 is 3-dehydroquinase; the sequence is LTLPDVRGAD…AAPGQLSATD (221 aa). Histidine 1179 acts as the Proton acceptor; for 3-dehydroquinate dehydratase activity in catalysis. Lysine 1207 serves as the catalytic Schiff-base intermediate with substrate; for 3-dehydroquinate dehydratase activity. The tract at residues 1289–1578 is shikimate dehydrogenase; sequence KKRFALFGSP…YERARAIVLG (290 aa).

This sequence in the N-terminal section; belongs to the sugar phosphate cyclases superfamily. Dehydroquinate synthase family. In the 2nd section; belongs to the EPSP synthase family. The protein in the 3rd section; belongs to the shikimate kinase family. It in the 4th section; belongs to the type-I 3-dehydroquinase family. This sequence in the C-terminal section; belongs to the shikimate dehydrogenase family. In terms of assembly, homodimer. Zn(2+) is required as a cofactor.

It is found in the cytoplasm. It catalyses the reaction 7-phospho-2-dehydro-3-deoxy-D-arabino-heptonate = 3-dehydroquinate + phosphate. It carries out the reaction 3-dehydroquinate = 3-dehydroshikimate + H2O. The enzyme catalyses shikimate + NADP(+) = 3-dehydroshikimate + NADPH + H(+). The catalysed reaction is shikimate + ATP = 3-phosphoshikimate + ADP + H(+). It catalyses the reaction 3-phosphoshikimate + phosphoenolpyruvate = 5-O-(1-carboxyvinyl)-3-phosphoshikimate + phosphate. Its pathway is metabolic intermediate biosynthesis; chorismate biosynthesis; chorismate from D-erythrose 4-phosphate and phosphoenolpyruvate: step 2/7. The protein operates within metabolic intermediate biosynthesis; chorismate biosynthesis; chorismate from D-erythrose 4-phosphate and phosphoenolpyruvate: step 3/7. It participates in metabolic intermediate biosynthesis; chorismate biosynthesis; chorismate from D-erythrose 4-phosphate and phosphoenolpyruvate: step 4/7. It functions in the pathway metabolic intermediate biosynthesis; chorismate biosynthesis; chorismate from D-erythrose 4-phosphate and phosphoenolpyruvate: step 5/7. Its pathway is metabolic intermediate biosynthesis; chorismate biosynthesis; chorismate from D-erythrose 4-phosphate and phosphoenolpyruvate: step 6/7. Its function is as follows. The AROM polypeptide catalyzes 5 consecutive enzymatic reactions in prechorismate polyaromatic amino acid biosynthesis. This is Pentafunctional AROM polypeptide from Neosartorya fischeri (strain ATCC 1020 / DSM 3700 / CBS 544.65 / FGSC A1164 / JCM 1740 / NRRL 181 / WB 181) (Aspergillus fischerianus).